The following is a 222-amino-acid chain: MKGFFITGTDTDVGKTFVTACMLRTLVDKRIRATAYKPVQSGAQWREGKWIAPDVDVYRKVIDVTDEDGCTYLLQTPCSPHLAAKIDGVTIEPDHIVAHVHQLQQTYDFVLVEGAGGIAVPLVDDSFLIAHLAQLLHFPLIIVARASVGTINHTVLTVEYAKAFGLQIAGIIMNGFSTPKNEIEQENIRMIEEMTHVPVIGEIPHMTNFSHQQIVWRKEWWQ.

12-17 (DVGKTF) is a binding site for ATP. T16 contacts Mg(2+). Residue K37 is part of the active site. Position 41 (S41) interacts with substrate. Residues D54 and 113 to 116 (EGAG) contribute to the ATP site. Mg(2+) contacts are provided by D54 and E113.

Belongs to the dethiobiotin synthetase family. Homodimer. It depends on Mg(2+) as a cofactor.

The protein resides in the cytoplasm. The catalysed reaction is (7R,8S)-7,8-diammoniononanoate + CO2 + ATP = (4R,5S)-dethiobiotin + ADP + phosphate + 3 H(+). It participates in cofactor biosynthesis; biotin biosynthesis; biotin from 7,8-diaminononanoate: step 1/2. In terms of biological role, catalyzes a mechanistically unusual reaction, the ATP-dependent insertion of CO2 between the N7 and N8 nitrogen atoms of 7,8-diaminopelargonic acid (DAPA, also called 7,8-diammoniononanoate) to form a ureido ring. The chain is ATP-dependent dethiobiotin synthetase BioD from Anoxybacillus flavithermus (strain DSM 21510 / WK1).